A 169-amino-acid chain; its full sequence is Der GTPase-activating protein YihI (169 aa).

Disordered regions lie at residues 1 to 100 (MKPS…AELE) and 144 to 169 (GLSYDDDEEEEEDEKQEDMMRLLRGN). Residues 10–19 (SKGHAKARRK) are compositionally biased toward basic residues. Residues 20-30 (TREELDQEARD) are compositionally biased toward basic and acidic residues. A compositionally biased stretch (basic residues) spans 31–40 (RKRQKKRRGH). Polar residues predominate over residues 49–58 (GNTTSGSKGQ). Acidic residues predominate over residues 147–159 (YDDDEEEEEDEKQ). The segment covering 160-169 (EDMMRLLRGN) has biased composition (basic and acidic residues).

This sequence belongs to the YihI family. Interacts with Der.

Its function is as follows. A GTPase-activating protein (GAP) that modifies Der/EngA GTPase function. May play a role in ribosome biogenesis. The sequence is that of Der GTPase-activating protein YihI from Escherichia coli O6:H1 (strain CFT073 / ATCC 700928 / UPEC).